The chain runs to 404 residues: Glucose-1-phosphate adenylyltransferase (404 aa).

Residues Tyr-99, Gly-164, 179 to 180, and Ser-197 contribute to the alpha-D-glucose 1-phosphate site; that span reads EK.

It belongs to the bacterial/plant glucose-1-phosphate adenylyltransferase family. As to quaternary structure, homotetramer.

It carries out the reaction alpha-D-glucose 1-phosphate + ATP + H(+) = ADP-alpha-D-glucose + diphosphate. It functions in the pathway glycan biosynthesis; glycogen biosynthesis. Involved in the biosynthesis of ADP-glucose, a building block required for the elongation reactions to produce glycogen. Catalyzes the reaction between ATP and alpha-D-glucose 1-phosphate (G1P) to produce pyrophosphate and ADP-Glc. In Rhodococcus opacus (strain B4), this protein is Glucose-1-phosphate adenylyltransferase.